Reading from the N-terminus, the 201-residue chain is Lipopolysaccharide core heptose(II)-phosphate phosphatase (201 aa).

The signal sequence occupies residues 1–35 (MLAFTLRFIKNKRYLATLAGALVIIAGLTSQHAWS).

This sequence belongs to the phosphoglycerate mutase family. Ais subfamily.

It is found in the periplasm. It participates in bacterial outer membrane biogenesis; lipopolysaccharide metabolism. Functionally, catalyzes the dephosphorylation of heptose(II) of the outer membrane lipopolysaccharide core. The protein is Lipopolysaccharide core heptose(II)-phosphate phosphatase of Salmonella paratyphi A (strain AKU_12601).